The following is a 752-amino-acid chain: Polyribonucleotide nucleotidyltransferase (752 aa).

Residues Asp542 and Asp548 each contribute to the Mg(2+) site. Positions 608-667 (PRITTIQIPVSKIGELIGPKGKNINALTEETGANISIEDDGTVFISAASGEAAEAAIEKI) constitute a KH domain. Positions 679-748 (GERFLGTVVK…NRGKISLVPV (70 aa)) constitute an S1 motif domain.

This sequence belongs to the polyribonucleotide nucleotidyltransferase family. The cofactor is Mg(2+).

The protein localises to the cytoplasm. The enzyme catalyses RNA(n+1) + phosphate = RNA(n) + a ribonucleoside 5'-diphosphate. Involved in mRNA degradation. Catalyzes the phosphorolysis of single-stranded polyribonucleotides processively in the 3'- to 5'-direction. The sequence is that of Polyribonucleotide nucleotidyltransferase from Corynebacterium efficiens (strain DSM 44549 / YS-314 / AJ 12310 / JCM 11189 / NBRC 100395).